We begin with the raw amino-acid sequence, 145 residues long: MMAEEQKVLTVNIVTPDGVVYDHHASMLVVPAMAGQLGIMANHEPIITPLEIGEIRVKRTDNPGHEDAIAITGGFMEVSHNIASIVADGAERARDINLSRAQRAKQRAEDAIKTASEKHDSDELRRAQIALQRAMNRIDVKNHLQ.

Residues 100–123 (RAQRAKQRAEDAIKTASEKHDSDE) are disordered. Residues 106 to 123 (QRAEDAIKTASEKHDSDE) show a composition bias toward basic and acidic residues.

It belongs to the ATPase epsilon chain family. As to quaternary structure, F-type ATPases have 2 components, CF(1) - the catalytic core - and CF(0) - the membrane proton channel. CF(1) has five subunits: alpha(3), beta(3), gamma(1), delta(1), epsilon(1). CF(0) has three main subunits: a, b and c.

The protein resides in the cell membrane. In terms of biological role, produces ATP from ADP in the presence of a proton gradient across the membrane. This Latilactobacillus sakei subsp. sakei (strain 23K) (Lactobacillus sakei subsp. sakei) protein is ATP synthase epsilon chain.